A 342-amino-acid chain; its full sequence is MVSVTRTVFGELPSGGGTVEKFQLRSDQLSVDIISWGCTITALQVKDRQGKASDVVLGFAELEGYLQKQPYFGAVVGRVANRIAKGRFTIGGKEYHLPVNREPNSLHGGFTGFDKVLWTPQVLTNGVQFFRVSPDGEEGYPGELKVWVTYTLDGGELVINYRAQASQTTPVNLTNHSYFNLAGQGSPNIYDHEVTIAADAYLPVDETLIPTGVIAPVEGTAFDLRKPVELGTHLQDYHIHGFDHNFCLKESKEKKFCARVRHAASGRILEVYTTQPGVQFYTGNFLDGTLKGKNGAVYPKHSGLCLETQNWPDSVNQPQFPPALLRPGEEYNHTTWFKFSVA.

Position 14 is a phosphoserine (S14). Beta-D-galactose contacts are provided by residues 81–82, H107, 176–178, D243, Q279, and E307; these read NR and HSY. The active-site Proton donor is H176. The Proton acceptor role is filled by E307.

It belongs to the aldose epimerase family. Monomer.

It is found in the cytoplasm. The catalysed reaction is alpha-D-galactose = beta-D-galactose. It catalyses the reaction alpha-D-glucose = beta-D-glucose. It participates in carbohydrate metabolism; hexose metabolism. It functions in the pathway carbohydrate metabolism; galactose metabolism. In terms of biological role, mutarotase that catalyzes the interconversion of beta-D-galactose and alpha-D-galactose during galactose metabolism. Beta-D-galactose is metabolized in the liver into glucose 1-phosphate, the primary metabolic fuel, by the action of four enzymes that constitute the Leloir pathway: GALM, GALK1 (galactokinase), GALT (galactose-1-phosphate uridylyltransferase) and GALE (UDP-galactose-4'-epimerase). Involved in the maintenance of the equilibrium between the beta- and alpha-anomers of galactose, therefore ensuring a sufficient supply of the alpha-anomer for GALK1. Also active on D-glucose although shows a preference for galactose over glucose. This Mus musculus (Mouse) protein is Galactose mutarotase.